We begin with the raw amino-acid sequence, 99 residues long: MSPMYYLYLSAVLFTLGAVGVLLRRNAIIVFMCVELMLNAANLALVTFSRINGNLDGQVMAFFVMVVAAAEVVVGLAIIVAIFRTRRSASVDDANLLKY.

3 helical membrane-spanning segments follow: residues 3 to 23 (PMYY…GVLL), 28 to 48 (IIVF…LVTF), and 62 to 82 (FFVM…IVAI).

The protein belongs to the complex I subunit 4L family. NDH-1 is composed of 14 different subunits. Subunits NuoA, H, J, K, L, M, N constitute the membrane sector of the complex.

Its subcellular location is the cell membrane. It catalyses the reaction a quinone + NADH + 5 H(+)(in) = a quinol + NAD(+) + 4 H(+)(out). Its function is as follows. NDH-1 shuttles electrons from NADH, via FMN and iron-sulfur (Fe-S) centers, to quinones in the respiratory chain. The immediate electron acceptor for the enzyme in this species is believed to be a menaquinone. Couples the redox reaction to proton translocation (for every two electrons transferred, four hydrogen ions are translocated across the cytoplasmic membrane), and thus conserves the redox energy in a proton gradient. This is NADH-quinone oxidoreductase subunit K from Acidothermus cellulolyticus (strain ATCC 43068 / DSM 8971 / 11B).